The primary structure comprises 377 residues: MSPTLKLALDLISRPSVTPEDAGCQDLMIERLKNIGFEIEYMPFGEVKNFYAKRGNSGPNLCFAGHTDVVPTGPEAEWKIPPFAPEIVDGVLYGRGAADMKGSLAAMVTAVENFVAKHPNHSGQISFLITSDEEGPFVDGTTRVVDALMERNEQVDWCIVGEPSSTKTLGDIIKNGRRGSFSGDLTVYGKQGHVAYPHLAENPIHLAAPALAEMASSHWDDGNDFFPPTSFQVSNIHSGTGATNVVPGKLNAQFNFRFSSELDFDALKVRVIEILDKHNLRYDIEWTYNGLPFLTRPGELVDAIVEAVQATVNITPELSTSGGTSDGRFIAKMGTQVVELGPINATIHQINECVDAESLNQLSEIYARILENLFAKK.

Position 66 (histidine 66) interacts with Zn(2+). Residue aspartate 68 is part of the active site. Aspartate 99 contributes to the Zn(2+) binding site. Catalysis depends on glutamate 133, which acts as the Proton acceptor. Zn(2+) is bound by residues glutamate 134, glutamate 162, and histidine 348.

Belongs to the peptidase M20A family. DapE subfamily. In terms of assembly, homodimer. It depends on Zn(2+) as a cofactor. Co(2+) serves as cofactor.

It carries out the reaction N-succinyl-(2S,6S)-2,6-diaminopimelate + H2O = (2S,6S)-2,6-diaminopimelate + succinate. It functions in the pathway amino-acid biosynthesis; L-lysine biosynthesis via DAP pathway; LL-2,6-diaminopimelate from (S)-tetrahydrodipicolinate (succinylase route): step 3/3. Its function is as follows. Catalyzes the hydrolysis of N-succinyl-L,L-diaminopimelic acid (SDAP), forming succinate and LL-2,6-diaminopimelate (DAP), an intermediate involved in the bacterial biosynthesis of lysine and meso-diaminopimelic acid, an essential component of bacterial cell walls. This chain is Succinyl-diaminopimelate desuccinylase, found in Marinomonas sp. (strain MWYL1).